The chain runs to 47 residues: Large ribosomal subunit protein bL34 (47 aa).

Basic residues-rich tracts occupy residues 1–22 (MAKGKRTFQPNNRRRSRVHGFR) and 36–47 (ARRRKGRKSLTA). Residues 1–47 (MAKGKRTFQPNNRRRSRVHGFRSRMSTRAGRAIVSARRRKGRKSLTA) are disordered.

It belongs to the bacterial ribosomal protein bL34 family.

This chain is Large ribosomal subunit protein bL34, found in Corynebacterium kroppenstedtii (strain DSM 44385 / JCM 11950 / CIP 105744 / CCUG 35717).